We begin with the raw amino-acid sequence, 120 residues long: Small ribosomal subunit protein bS16 (120 aa).

Residues 84 to 110 show a composition bias toward basic and acidic residues; sequence KREVKSNPEKAKPGKRAQERAAEKAQK. The interval 84 to 120 is disordered; it reads KREVKSNPEKAKPGKRAQERAAEKAQKAADAAAATAE. Residues 111–120 are compositionally biased toward low complexity; that stretch reads AADAAAATAE.

It belongs to the bacterial ribosomal protein bS16 family.

In Rhizobium rhizogenes (strain K84 / ATCC BAA-868) (Agrobacterium radiobacter), this protein is Small ribosomal subunit protein bS16.